We begin with the raw amino-acid sequence, 130 residues long: Histone H2A type 1 (130 aa).

The tract at residues 1-22 (MSGRGKQGGKARAKAKTRSSRA) is disordered. The residue at position 2 (Ser-2) is an N-acetylserine. Ser-2 is subject to Phosphoserine; by RPS6KA5. Arg-4 is modified (citrulline; alternate). At Arg-4 the chain carries Symmetric dimethylarginine; by PRMT5; alternate. N6-(2-hydroxyisobutyryl)lysine is present on Lys-6. A compositionally biased stretch (basic residues) spans 7–19 (QGGKARAKAKTRS). N6-(2-hydroxyisobutyryl)lysine; alternate is present on Lys-10. Lys-10 carries the post-translational modification N6-lactoyllysine; alternate. Lys-10 carries the N6-succinyllysine; alternate modification. Residues Lys-14 and Lys-16 each participate in a glycyl lysine isopeptide (Lys-Gly) (interchain with G-Cter in ubiquitin) cross-link. At Lys-37 the chain carries N6-(2-hydroxyisobutyryl)lysine; alternate. Lys-37 bears the N6-(beta-hydroxybutyryl)lysine; alternate mark. Lys-37 is subject to N6-crotonyllysine; alternate. Residues Lys-75 and Lys-76 each carry the N6-(2-hydroxyisobutyryl)lysine modification. At Lys-96 the chain carries N6-(2-hydroxyisobutyryl)lysine; alternate. The residue at position 96 (Lys-96) is an N6-succinyllysine; alternate. Lys-96 carries the N6-glutaryllysine; alternate modification. Lys-100 bears the N6-glutaryllysine mark. An N5-methylglutamine modification is found at Gln-105. Lys-119 carries the N6-(2-hydroxyisobutyryl)lysine; alternate modification. Lys-119 and Lys-120 each carry N6-crotonyllysine; alternate. An N6-glutaryllysine; alternate mark is found at Lys-119 and Lys-120. Residue Lys-120 forms a Glycyl lysine isopeptide (Lys-Gly) (interchain with G-Cter in ubiquitin); alternate linkage. Thr-121 bears the Phosphothreonine; by DCAF1 mark. Lys-126 carries the N6-crotonyllysine; alternate modification. The residue at position 126 (Lys-126) is an N6-glutaryllysine; alternate.

The protein belongs to the histone H2A family. In terms of assembly, the nucleosome is a histone octamer containing two molecules each of H2A, H2B, H3 and H4 assembled in one H3-H4 heterotetramer and two H2A-H2B heterodimers. The octamer wraps approximately 147 bp of DNA. Interacts with VRK1; the interaction is mediated by the nucleosome acidic patch, a cluster of negatively charged residues of H2A and H2B forming a cleft within the nucleosome core. Deiminated on Arg-4 in granulocytes upon calcium entry. Post-translationally, monoubiquitination of Lys-120 (H2AK119Ub) by RING1, TRIM37 and RNF2/RING2 complex gives a specific tag for epigenetic transcriptional repression and participates in X chromosome inactivation of female mammals. It is involved in the initiation of both imprinted and random X inactivation. Ubiquitinated H2A is enriched in inactive X chromosome chromatin. Ubiquitination of H2A functions downstream of methylation of 'Lys-27' of histone H3 (H3K27me). H2AK119Ub by RNF2/RING2 can also be induced by ultraviolet and may be involved in DNA repair. Following DNA double-strand breaks (DSBs), it is ubiquitinated through 'Lys-63' linkage of ubiquitin moieties by the E2 ligase UBE2N and the E3 ligases RNF8 and RNF168, leading to the recruitment of repair proteins to sites of DNA damage. Ubiquitination at Lys-14 and Lys-16 (H2AK13Ub and H2AK15Ub, respectively) in response to DNA damage is initiated by RNF168 that mediates monoubiquitination at these 2 sites, and 'Lys-63'-linked ubiquitin are then conjugated to monoubiquitin; RNF8 is able to extend 'Lys-63'-linked ubiquitin chains in vitro. H2AK119Ub and ionizing radiation-induced 'Lys-63'-linked ubiquitination (H2AK13Ub and H2AK15Ub) are distinct events. In terms of processing, phosphorylation on Ser-2 (H2AS1ph) is enhanced during mitosis. Phosphorylation on Ser-2 by RPS6KA5/MSK1 directly represses transcription. Acetylation of H3 inhibits Ser-2 phosphorylation by RPS6KA5/MSK1. Phosphorylation at Thr-121 (H2AT120ph) by DCAF1 is present in the regulatory region of many tumor suppresor genes and down-regulates their transcription. Symmetric dimethylation on Arg-4 by the PRDM1/PRMT5 complex may play a crucial role in the germ-cell lineage. Post-translationally, glutamine methylation at Gln-105 (H2AQ104me) by FBL is specifically dedicated to polymerase I. It is present at 35S ribosomal DNA locus and impairs binding of the FACT complex. In terms of processing, crotonylation (Kcr) is specifically present in male germ cells and marks testis-specific genes in post-meiotic cells, including X-linked genes that escape sex chromosome inactivation in haploid cells. Crotonylation marks active promoters and enhancers and confers resistance to transcriptional repressors. It is also associated with post-meiotically activated genes on autosomes. Lactylated in macrophages by EP300/P300 by using lactoyl-CoA directly derived from endogenous or exogenous lactate, leading to stimulates gene transcription.

The protein localises to the nucleus. It is found in the chromosome. In terms of biological role, core component of nucleosome. Nucleosomes wrap and compact DNA into chromatin, limiting DNA accessibility to the cellular machineries which require DNA as a template. Histones thereby play a central role in transcription regulation, DNA repair, DNA replication and chromosomal stability. DNA accessibility is regulated via a complex set of post-translational modifications of histones, also called histone code, and nucleosome remodeling. The sequence is that of Histone H2A type 1 from Bos taurus (Bovine).